A 206-amino-acid chain; its full sequence is Ribonuclease HII (206 aa).

In terms of domain architecture, RNase H type-2 spans Glu14–Val206. A divalent metal cation contacts are provided by Asp20, Glu21, and Asp117.

The protein belongs to the RNase HII family. Requires Mn(2+) as cofactor. The cofactor is Mg(2+).

Its subcellular location is the cytoplasm. It carries out the reaction Endonucleolytic cleavage to 5'-phosphomonoester.. Functionally, endonuclease that specifically degrades the RNA of RNA-DNA hybrids. The polypeptide is Ribonuclease HII (Chlorobium chlorochromatii (strain CaD3)).